A 41-amino-acid chain; its full sequence is Large ribosomal subunit protein bL36B (41 aa).

This sequence belongs to the bacterial ribosomal protein bL36 family.

This chain is Large ribosomal subunit protein bL36B, found in Actinobacillus pleuropneumoniae serotype 5b (strain L20).